Here is a 267-residue protein sequence, read N- to C-terminus: L-aspartate dehydrogenase (267 aa).

NAD(+) is bound by residues Ala124 and Asn190. His218 is a catalytic residue.

It belongs to the L-aspartate dehydrogenase family.

It catalyses the reaction L-aspartate + NADP(+) + H2O = oxaloacetate + NH4(+) + NADPH + H(+). The enzyme catalyses L-aspartate + NAD(+) + H2O = oxaloacetate + NH4(+) + NADH + H(+). It functions in the pathway cofactor biosynthesis; NAD(+) biosynthesis; iminoaspartate from L-aspartate (dehydrogenase route): step 1/1. Functionally, specifically catalyzes the NAD or NADP-dependent dehydrogenation of L-aspartate to iminoaspartate. This Methanococcus maripaludis (strain C7 / ATCC BAA-1331) protein is L-aspartate dehydrogenase.